The primary structure comprises 103 residues: uncharacterized protein (103 aa).

A compositionally biased stretch (low complexity) spans 38 to 51; it reads TTTTSSTTSASTTS. The segment at 38–70 is disordered; that stretch reads TTTTSSTTSASTTSQPSFSLPTSCNSNSPQSNL. Residues 52–70 are compositionally biased toward polar residues; that stretch reads QPSFSLPTSCNSNSPQSNL.

This is an uncharacterized protein from Dictyostelium discoideum (Social amoeba).